A 141-amino-acid polypeptide reads, in one-letter code: Nucleoside diphosphate kinase (141 aa).

ATP-binding residues include Lys11, Phe59, Arg87, Thr93, Arg104, and Asn114. Residue His117 is the Pros-phosphohistidine intermediate of the active site.

This sequence belongs to the NDK family. Homotetramer. The cofactor is Mg(2+).

It is found in the cytoplasm. The enzyme catalyses a 2'-deoxyribonucleoside 5'-diphosphate + ATP = a 2'-deoxyribonucleoside 5'-triphosphate + ADP. It carries out the reaction a ribonucleoside 5'-diphosphate + ATP = a ribonucleoside 5'-triphosphate + ADP. Major role in the synthesis of nucleoside triphosphates other than ATP. The ATP gamma phosphate is transferred to the NDP beta phosphate via a ping-pong mechanism, using a phosphorylated active-site intermediate. The sequence is that of Nucleoside diphosphate kinase from Cupriavidus necator (strain ATCC 17699 / DSM 428 / KCTC 22496 / NCIMB 10442 / H16 / Stanier 337) (Ralstonia eutropha).